The primary structure comprises 471 residues: UDP-N-acetylmuramate--L-alanine ligase (471 aa).

125-131 (GTHGKTT) is a binding site for ATP.

This sequence belongs to the MurCDEF family.

The protein resides in the cytoplasm. It catalyses the reaction UDP-N-acetyl-alpha-D-muramate + L-alanine + ATP = UDP-N-acetyl-alpha-D-muramoyl-L-alanine + ADP + phosphate + H(+). Its pathway is cell wall biogenesis; peptidoglycan biosynthesis. Cell wall formation. This is UDP-N-acetylmuramate--L-alanine ligase from Kineococcus radiotolerans (strain ATCC BAA-149 / DSM 14245 / SRS30216).